The following is a 98-amino-acid chain: DNA-binding protein Fis (98 aa).

Residues 74–93 (QTRAALMMGINRGTLRKKLK) constitute a DNA-binding region (H-T-H motif).

Belongs to the transcriptional regulatory Fis family. As to quaternary structure, homodimer.

Its function is as follows. Activates ribosomal RNA transcription. Plays a direct role in upstream activation of rRNA promoters. This is DNA-binding protein Fis from Pectobacterium atrosepticum (strain SCRI 1043 / ATCC BAA-672) (Erwinia carotovora subsp. atroseptica).